The primary structure comprises 40 residues: Photosystem II reaction center protein J (40 aa).

Residues 8–28 (IPLWVIGTVAGILVIGIIGIF) traverse the membrane as a helical segment.

Belongs to the PsbJ family. In terms of assembly, PSII is composed of 1 copy each of membrane proteins PsbA, PsbB, PsbC, PsbD, PsbE, PsbF, PsbH, PsbI, PsbJ, PsbK, PsbL, PsbM, PsbT, PsbX, PsbY, PsbZ, Psb30/Ycf12, at least 3 peripheral proteins of the oxygen-evolving complex and a large number of cofactors. It forms dimeric complexes.

Its subcellular location is the plastid. It is found in the chloroplast thylakoid membrane. In terms of biological role, one of the components of the core complex of photosystem II (PSII). PSII is a light-driven water:plastoquinone oxidoreductase that uses light energy to abstract electrons from H(2)O, generating O(2) and a proton gradient subsequently used for ATP formation. It consists of a core antenna complex that captures photons, and an electron transfer chain that converts photonic excitation into a charge separation. This chain is Photosystem II reaction center protein J, found in Lobularia maritima (Sweet alyssum).